The chain runs to 419 residues: tRNA (guanine-N(7)-)-methyltransferase non-catalytic subunit wuho (419 aa).

Positions 51-61 (STAEQQSAAAE) are enriched in low complexity. The disordered stretch occupies residues 51-75 (STAEQQSAAAETGGGSVVEGEEPKD). WD repeat units lie at residues 87–127 (APTV…AQLV), 174–213 (GHLSIVYDILWTGDQQHIITSDRDDKIRVTNYPATFDIHS), and 217–255 (GHKEFVSGLALLSDEHICSVSGDKTLRVWNFKAGKELLR).

It belongs to the WD repeat TRM82 family. As to quaternary structure, forms a heterodimer with the catalytic subunit Mettl1. Interacts with mei-P26 and weakly interacts with bgcn; required for the function or formation of the mei-P26-bgcn-bam-sxl complex. Interacts with nanos; may be involved in mei-P26-dependent derepression of the BMP signaling pathway. Interacts with Myc; the interaction may be mediated by mei-P26 and may be involved in the regulation of ribosome biogenesis. In terms of tissue distribution, in testis, it is present at high level in hub cells, a niche for germline stem cells of testis. Ubiquitously expressed in all testicular cells throughout spermatogenesis. Ubiquitously expressed in all germline and somatic cells of the ovary.

The protein resides in the nucleus. It is found in the cytoplasm. The protein operates within tRNA modification; N(7)-methylguanine-tRNA biosynthesis. Required for the Mettl1-dependent formation of N(7)-methylguanine at position 46 (m7G46) in tRNA. In the Mettl1-wuho methyltransferase complex, it is required to stabilize and induce conformational changes of the catalytic subunit. Required for binding of nanos mRNA and repression of translation by the mei-P26-bgcn-bam-sxl complex. May cooperate with mei-P26 and nanos to derepress the BMP signaling pathway. May cooperate with mei-P26 to suppress expression of a subset of microRNAs. May cooperate with mei-P26 to regulate bam expression levels in germline cells during gametogenesis. Required to promote mitosis to meiosis transition during gametogenesis. May regulate germline cell division in part by regulating ribosome biogenesis. The polypeptide is tRNA (guanine-N(7)-)-methyltransferase non-catalytic subunit wuho (Drosophila willistoni (Fruit fly)).